A 417-amino-acid chain; its full sequence is NADH-quinone oxidoreductase subunit D (417 aa).

This sequence belongs to the complex I 49 kDa subunit family. In terms of assembly, NDH-1 is composed of 14 different subunits. Subunits NuoB, C, D, E, F, and G constitute the peripheral sector of the complex.

The protein resides in the cell inner membrane. The enzyme catalyses a quinone + NADH + 5 H(+)(in) = a quinol + NAD(+) + 4 H(+)(out). Functionally, NDH-1 shuttles electrons from NADH, via FMN and iron-sulfur (Fe-S) centers, to quinones in the respiratory chain. The immediate electron acceptor for the enzyme in this species is believed to be ubiquinone. Couples the redox reaction to proton translocation (for every two electrons transferred, four hydrogen ions are translocated across the cytoplasmic membrane), and thus conserves the redox energy in a proton gradient. The chain is NADH-quinone oxidoreductase subunit D from Burkholderia ambifaria (strain ATCC BAA-244 / DSM 16087 / CCUG 44356 / LMG 19182 / AMMD) (Burkholderia cepacia (strain AMMD)).